A 148-amino-acid chain; its full sequence is Large ribosomal subunit protein uL15 (148 aa).

Positions 1-40 are enriched in basic and acidic residues; sequence MADILQMHDLKPAPGANKDRIRVGRGEGSKGKTSGRGDKG. A disordered region spans residues 1–47; that stretch reads MADILQMHDLKPAPGANKDRIRVGRGEGSKGKTSGRGDKGTKKRYQV.

The protein belongs to the universal ribosomal protein uL15 family. Part of the 50S ribosomal subunit.

In terms of biological role, binds to the 23S rRNA. The chain is Large ribosomal subunit protein uL15 from Bifidobacterium adolescentis (strain ATCC 15703 / DSM 20083 / NCTC 11814 / E194a).